A 1262-amino-acid polypeptide reads, in one-letter code: Isoleucine--tRNA ligase, cytoplasmic (1262 aa).

Met1 is modified (N-acetylmethionine). A 'HIGH' region motif is present at residues 48 to 58 (PFATGLPHYGH). The 'KMSKS' region motif lies at 600 to 604 (KMSKR). Lys603 is a binding site for ATP. 2 positions are modified to phosphoserine: Ser1047 and Ser1049. Thr1058 is subject to Phosphothreonine.

This sequence belongs to the class-I aminoacyl-tRNA synthetase family. As to quaternary structure, part of a multisubunit complex that groups tRNA ligases for Arg (RARS1), Asp (DARS1), Gln (QARS1), Ile (IARS1), Leu (LARS1), Lys (KARS1), Met (MARS1) the bifunctional ligase for Glu and Pro (EPRS1) and the auxiliary subunits AIMP1/p43, AIMP2/p38 and EEF1E1/p18. Expressed in liver and muscle (at protein level).

Its subcellular location is the cytoplasm. It is found in the cytosol. It catalyses the reaction tRNA(Ile) + L-isoleucine + ATP = L-isoleucyl-tRNA(Ile) + AMP + diphosphate. Catalyzes the specific attachment of an amino acid to its cognate tRNA in a 2 step reaction: the amino acid (AA) is first activated by ATP to form AA-AMP and then transferred to the acceptor end of the tRNA. The polypeptide is Isoleucine--tRNA ligase, cytoplasmic (Homo sapiens (Human)).